The sequence spans 588 residues: L-fucose isomerase (588 aa).

Residues glutamate 335 and aspartate 359 each act as proton acceptor in the active site. Positions 335, 359, and 525 each coordinate Mn(2+).

The protein belongs to the L-fucose isomerase family. It depends on Mn(2+) as a cofactor.

Its subcellular location is the cytoplasm. The enzyme catalyses L-fucose = L-fuculose. It functions in the pathway carbohydrate degradation; L-fucose degradation; L-lactaldehyde and glycerone phosphate from L-fucose: step 1/3. Converts the aldose L-fucose into the corresponding ketose L-fuculose. The chain is L-fucose isomerase from Streptococcus pneumoniae (strain ATCC 700669 / Spain 23F-1).